The primary structure comprises 238 residues: tRNA (guanine-N(7)-)-methyltransferase (238 aa).

Glutamate 68, glutamate 93, aspartate 120, and aspartate 143 together coordinate S-adenosyl-L-methionine. Aspartate 143 is a catalytic residue. Substrate contacts are provided by residues lysine 147, aspartate 179, and 216–219 (TKFE).

This sequence belongs to the class I-like SAM-binding methyltransferase superfamily. TrmB family. In terms of assembly, monomer.

The catalysed reaction is guanosine(46) in tRNA + S-adenosyl-L-methionine = N(7)-methylguanosine(46) in tRNA + S-adenosyl-L-homocysteine. It functions in the pathway tRNA modification; N(7)-methylguanine-tRNA biosynthesis. Its function is as follows. Catalyzes the formation of N(7)-methylguanine at position 46 (m7G46) in tRNA. The polypeptide is tRNA (guanine-N(7)-)-methyltransferase (Edwardsiella ictaluri (strain 93-146)).